Here is a 436-residue protein sequence, read N- to C-terminus: Trigger factor (436 aa).

In terms of domain architecture, PPIase FKBP-type spans 161–246; the sequence is DDQLNIDFVG…VNSVSEPKLP (86 aa).

Belongs to the FKBP-type PPIase family. Tig subfamily.

The protein resides in the cytoplasm. The enzyme catalyses [protein]-peptidylproline (omega=180) = [protein]-peptidylproline (omega=0). Involved in protein export. Acts as a chaperone by maintaining the newly synthesized protein in an open conformation. Functions as a peptidyl-prolyl cis-trans isomerase. The chain is Trigger factor from Pseudomonas fluorescens (strain ATCC BAA-477 / NRRL B-23932 / Pf-5).